A 307-amino-acid chain; its full sequence is UDP-3-O-acyl-N-acetylglucosamine deacetylase (307 aa).

Zn(2+) is bound by residues His78, His241, and Asp245. The active-site Proton donor is the His268.

It belongs to the LpxC family. Zn(2+) is required as a cofactor.

The catalysed reaction is a UDP-3-O-[(3R)-3-hydroxyacyl]-N-acetyl-alpha-D-glucosamine + H2O = a UDP-3-O-[(3R)-3-hydroxyacyl]-alpha-D-glucosamine + acetate. It participates in glycolipid biosynthesis; lipid IV(A) biosynthesis; lipid IV(A) from (3R)-3-hydroxytetradecanoyl-[acyl-carrier-protein] and UDP-N-acetyl-alpha-D-glucosamine: step 2/6. Its function is as follows. Catalyzes the hydrolysis of UDP-3-O-myristoyl-N-acetylglucosamine to form UDP-3-O-myristoylglucosamine and acetate, the committed step in lipid A biosynthesis. This is UDP-3-O-acyl-N-acetylglucosamine deacetylase from Polaromonas naphthalenivorans (strain CJ2).